Reading from the N-terminus, the 122-residue chain is Large ribosomal subunit protein uL18 (122 aa).

The interval 1-27 (MATLSKKQQTQKRHKRLRRHLNGTNHR) is disordered. A compositionally biased stretch (basic residues) spans 9 to 27 (QTQKRHKRLRRHLNGTNHR).

It belongs to the universal ribosomal protein uL18 family. As to quaternary structure, part of the 50S ribosomal subunit; part of the 5S rRNA/L5/L18/L25 subcomplex. Contacts the 5S and 23S rRNAs.

In terms of biological role, this is one of the proteins that bind and probably mediate the attachment of the 5S RNA into the large ribosomal subunit, where it forms part of the central protuberance. The polypeptide is Large ribosomal subunit protein uL18 (Prochlorococcus marinus (strain MIT 9211)).